A 566-amino-acid polypeptide reads, in one-letter code: CTP synthase (566 aa).

Residues 1 to 265 (MTKYVFVTGG…DEIVCHKLNL (265 aa)) form an amidoligase domain region. Serine 13 lines the CTP pocket. Serine 13 is a binding site for UTP. Residues 14-19 (SLGKGI) and aspartate 71 each bind ATP. Positions 71 and 139 each coordinate Mg(2+). CTP-binding positions include 146–148 (DIE), 186–191 (KTKPTQ), and lysine 222. UTP is bound by residues 186–191 (KTKPTQ) and lysine 222. The 254-residue stretch at 290-543 (EIALVGKYVD…IEAAAVFADK (254 aa)) folds into the Glutamine amidotransferase type-1 domain. Glycine 351 contributes to the L-glutamine binding site. Cysteine 378 functions as the Nucleophile; for glutamine hydrolysis in the catalytic mechanism. L-glutamine is bound by residues 379-382 (LGMQ), glutamate 402, and arginine 469. Active-site residues include histidine 516 and glutamate 518. The disordered stretch occupies residues 545-566 (PSSEGAISADKPERTTTGAYIQ).

Belongs to the CTP synthase family. Homotetramer.

The enzyme catalyses UTP + L-glutamine + ATP + H2O = CTP + L-glutamate + ADP + phosphate + 2 H(+). It catalyses the reaction L-glutamine + H2O = L-glutamate + NH4(+). The catalysed reaction is UTP + NH4(+) + ATP = CTP + ADP + phosphate + 2 H(+). The protein operates within pyrimidine metabolism; CTP biosynthesis via de novo pathway; CTP from UDP: step 2/2. With respect to regulation, allosterically activated by GTP, when glutamine is the substrate; GTP has no effect on the reaction when ammonia is the substrate. The allosteric effector GTP functions by stabilizing the protein conformation that binds the tetrahedral intermediate(s) formed during glutamine hydrolysis. Inhibited by the product CTP, via allosteric rather than competitive inhibition. In terms of biological role, catalyzes the ATP-dependent amination of UTP to CTP with either L-glutamine or ammonia as the source of nitrogen. Regulates intracellular CTP levels through interactions with the four ribonucleotide triphosphates. This is CTP synthase from Nitrosospira multiformis (strain ATCC 25196 / NCIMB 11849 / C 71).